The following is an 85-amino-acid chain: Small ribosomal subunit protein uS15c (85 aa).

It belongs to the universal ribosomal protein uS15 family. As to quaternary structure, part of the 30S ribosomal subunit.

The protein resides in the plastid. The protein localises to the chloroplast. This Chaetosphaeridium globosum (Charophycean green alga) protein is Small ribosomal subunit protein uS15c (rps15).